The primary structure comprises 312 residues: Putative 1-aminocyclopropane-1-carboxylate deaminase (312 aa).

N6-(pyridoxal phosphate)lysine is present on lysine 42.

Belongs to the ACC deaminase/D-cysteine desulfhydrase family. Pyridoxal 5'-phosphate serves as cofactor.

It carries out the reaction 1-aminocyclopropane-1-carboxylate + H2O = 2-oxobutanoate + NH4(+). The polypeptide is Putative 1-aminocyclopropane-1-carboxylate deaminase (Thermotoga maritima (strain ATCC 43589 / DSM 3109 / JCM 10099 / NBRC 100826 / MSB8)).